Consider the following 184-residue polypeptide: Dirigent protein 14 (184 aa).

Residues 1 to 20 form the signal peptide; the sequence is MANQIYLFSLICLSVLLCQS. An intrachain disulfide couples C36 to C182. N55 and N119 each carry an N-linked (GlcNAc...) asparagine glycan.

This sequence belongs to the plant dirigent protein family. In terms of assembly, homodimer.

Its subcellular location is the secreted. The protein resides in the extracellular space. It is found in the apoplast. In terms of biological role, dirigent proteins impart stereoselectivity on the phenoxy radical-coupling reaction, yielding optically active lignans from two molecules of coniferyl alcohol in the biosynthesis of lignans, flavonolignans, and alkaloids and thus plays a central role in plant secondary metabolism. The protein is Dirigent protein 14 (DIR14) of Arabidopsis thaliana (Mouse-ear cress).